The sequence spans 504 residues: Maturase K (504 aa).

The protein belongs to the intron maturase 2 family. MatK subfamily.

It localises to the plastid. The protein localises to the chloroplast. Usually encoded in the trnK tRNA gene intron. Probably assists in splicing its own and other chloroplast group II introns. The protein is Maturase K of Lobularia maritima (Sweet alyssum).